Here is a 153-residue protein sequence, read N- to C-terminus: Interleukin-4 (153 aa).

Residues 1 to 24 (MGLTSQLLPPLFFLLACAGNFAHG) form the signal peptide. Intrachain disulfides connect cysteine 27/cysteine 151, cysteine 48/cysteine 89, and cysteine 70/cysteine 123. Asparagine 62 carries N-linked (GlcNAc...) asparagine glycosylation.

This sequence belongs to the IL-4/IL-13 family.

Its subcellular location is the secreted. Functionally, participates in at least several B-cell activation processes as well as of other cell types. It is a costimulator of DNA-synthesis. It induces the expression of class II MHC molecules on resting B-cells. It enhances both secretion and cell surface expression of IgE and IgG1. It also regulates the expression of the low affinity Fc receptor for IgE (CD23) on both lymphocytes and monocytes. Positively regulates IL31RA expression in macrophages. Stimulates autophagy in dendritic cells by interfering with mTORC1 signaling and through the induction of RUFY4. This Cercocebus atys (Sooty mangabey) protein is Interleukin-4 (IL4).